The chain runs to 408 residues: MAENFRIIDGGVTAPKGFIANGHKDRKYGVTIIASEVDAVCAGVFTTNKVFAHPVSLSKETLKNSDTFRAIIANSGNANCFTKGGMDDARAFVKKASSLLNIPESQILSASTGVIGRKMAMDILNREVEKAYESLKLESNNENAAKAIMTTDAFKKTVAVEFNVGEKVVKIGGIAKGAGMIAPNMLHATMLGFITTDIEISKEELKNSLQNAADESFNNAVVDGDMSTNDTVFVLANGKSNVNYRECIEEFDKALLYISTELAKMIVSDGEGAKKLIEAVLKGAATKEDAKKASMSIVRSLLLKTAIHGADPNWGRIAAAVGYSGAEMDMNNFDIIISSITSGKETYLVKCGEQLADEGTAELKMAQEIMKDSKIRITVDLKKGEFKNTSFGCDLGYEYVRINSEYTT.

Residues Thr-150, Lys-176, Thr-189, Glu-271, Asn-403, and Thr-408 each coordinate substrate. Residue Thr-189 is the Nucleophile of the active site.

The protein belongs to the ArgJ family. In terms of assembly, heterotetramer of two alpha and two beta chains.

It localises to the cytoplasm. The enzyme catalyses N(2)-acetyl-L-ornithine + L-glutamate = N-acetyl-L-glutamate + L-ornithine. The protein operates within amino-acid biosynthesis; L-arginine biosynthesis; L-ornithine and N-acetyl-L-glutamate from L-glutamate and N(2)-acetyl-L-ornithine (cyclic): step 1/1. Catalyzes the transfer of the acetyl group from N(2)-acetylornithine to glutamate, forming N-acetylglutamate and L-ornithine. The polypeptide is Glutamate N-acetyltransferase (Methanococcus vannielii (strain ATCC 35089 / DSM 1224 / JCM 13029 / OCM 148 / SB)).